The primary structure comprises 359 residues: 3-isopropylmalate dehydrogenase (359 aa).

76 to 89 (GPKWDDPSAKTRPE) contacts NAD(+). Substrate contacts are provided by arginine 96, arginine 106, arginine 134, and aspartate 223. Residues aspartate 223, aspartate 247, and aspartate 251 each contribute to the Mg(2+) site. 281 to 293 (GSAPDIAGKSVAN) is an NAD(+) binding site.

This sequence belongs to the isocitrate and isopropylmalate dehydrogenases family. LeuB type 1 subfamily. Homodimer. The cofactor is Mg(2+). Requires Mn(2+) as cofactor.

It is found in the cytoplasm. It carries out the reaction (2R,3S)-3-isopropylmalate + NAD(+) = 4-methyl-2-oxopentanoate + CO2 + NADH. It participates in amino-acid biosynthesis; L-leucine biosynthesis; L-leucine from 3-methyl-2-oxobutanoate: step 3/4. Its function is as follows. Catalyzes the oxidation of 3-carboxy-2-hydroxy-4-methylpentanoate (3-isopropylmalate) to 3-carboxy-4-methyl-2-oxopentanoate. The product decarboxylates to 4-methyl-2 oxopentanoate. This is 3-isopropylmalate dehydrogenase from Rhodopirellula baltica (strain DSM 10527 / NCIMB 13988 / SH1).